A 182-amino-acid polypeptide reads, in one-letter code: Inosine/xanthosine triphosphatase (182 aa).

The protein belongs to the YjjX NTPase family. Homodimer. The cofactor is Mg(2+). It depends on Mn(2+) as a cofactor.

It catalyses the reaction XTP + H2O = XDP + phosphate + H(+). It carries out the reaction ITP + H2O = IDP + phosphate + H(+). Its function is as follows. Phosphatase that hydrolyzes non-canonical purine nucleotides such as XTP and ITP to their respective diphosphate derivatives. Probably excludes non-canonical purines from DNA/RNA precursor pool, thus preventing their incorporation into DNA/RNA and avoiding chromosomal lesions. In Vibrio parahaemolyticus serotype O3:K6 (strain RIMD 2210633), this protein is Inosine/xanthosine triphosphatase.